We begin with the raw amino-acid sequence, 103 residues long: Small ribosomal subunit protein uS10 (103 aa).

This sequence belongs to the universal ribosomal protein uS10 family. In terms of assembly, part of the 30S ribosomal subunit.

Involved in the binding of tRNA to the ribosomes. The protein is Small ribosomal subunit protein uS10 of Polynucleobacter necessarius subsp. necessarius (strain STIR1).